The following is a 602-amino-acid chain: Elongation factor 4 (602 aa).

The tr-type G domain occupies 6–188 (DHIRNFSIVA…AIVNKLPAPK (183 aa)). Residues 18–23 (DHGKST) and 135–138 (NKID) each bind GTP.

Belongs to the TRAFAC class translation factor GTPase superfamily. Classic translation factor GTPase family. LepA subfamily.

The protein resides in the cell inner membrane. It carries out the reaction GTP + H2O = GDP + phosphate + H(+). Functionally, required for accurate and efficient protein synthesis under certain stress conditions. May act as a fidelity factor of the translation reaction, by catalyzing a one-codon backward translocation of tRNAs on improperly translocated ribosomes. Back-translocation proceeds from a post-translocation (POST) complex to a pre-translocation (PRE) complex, thus giving elongation factor G a second chance to translocate the tRNAs correctly. Binds to ribosomes in a GTP-dependent manner. In Brucella suis (strain ATCC 23445 / NCTC 10510), this protein is Elongation factor 4.